The sequence spans 63 residues: Alpha-conotoxin-like Sm1.3 (63 aa).

Positions 1–16 (MFTVFLLVVLATTVVS) are cleaved as a signal peptide. The propeptide occupies 17–43 (SPSDRASDGRNAAANEKASDVIALALK). Cystine bridges form between Cys-45/Cys-51 and Cys-46/Cys-59. Met-58 is subject to Methionine sulfoxide; partial. Position 59 is a cysteine amide; partial (Cys-59).

This sequence belongs to the conotoxin A superfamily. As to expression, expressed by the venom duct.

It localises to the secreted. Functionally, alpha-conotoxins act on postsynaptic membranes, they bind to the nicotinic acetylcholine receptors (nAChR) and thus inhibit them. The chain is Alpha-conotoxin-like Sm1.3 from Conus stercusmuscarum (Fly-specked cone).